The sequence spans 504 residues: Cytochrome P450 3A11 (504 aa).

C443 lines the heme pocket.

This sequence belongs to the cytochrome P450 family. Heme is required as a cofactor. Highly expressed in liver.

The protein localises to the endoplasmic reticulum membrane. It localises to the microsome membrane. It carries out the reaction an organic molecule + reduced [NADPH--hemoprotein reductase] + O2 = an alcohol + oxidized [NADPH--hemoprotein reductase] + H2O + H(+). Catalyzes erythromycin N-demethylation, nifedipine oxidation and testosterone 6 beta-hydroxylation. The sequence is that of Cytochrome P450 3A11 (Cyp3a11) from Mus musculus (Mouse).